A 77-amino-acid chain; its full sequence is Probable small nuclear ribonucleoprotein G (77 aa).

One can recognise a Sm domain in the interval 4–76; sequence THPPELKKYM…VVIMEPKERI (73 aa).

It belongs to the snRNP Sm proteins family. Core component of the spliceosomal U1, U2, U4 and U5 small nuclear ribonucleoproteins (snRNPs), the building blocks of the spliceosome.

Its subcellular location is the cytoplasm. It is found in the cytosol. The protein localises to the nucleus. Functionally, plays a role in pre-mRNA splicing as a core component of the spliceosomal U1, U2, U4 and U5 small nuclear ribonucleoproteins (snRNPs), the building blocks of the spliceosome. The sequence is that of Probable small nuclear ribonucleoprotein G (snr-7) from Caenorhabditis elegans.